A 1415-amino-acid chain; its full sequence is DNA-directed RNA polymerase subunit beta' (1415 aa).

C70, C72, C85, and C88 together coordinate Zn(2+). Mg(2+) contacts are provided by D461, D463, and D465. Zn(2+)-binding residues include C820, C894, C901, and C904.

The protein belongs to the RNA polymerase beta' chain family. The RNAP catalytic core consists of 2 alpha, 1 beta, 1 beta' and 1 omega subunit. When a sigma factor is associated with the core the holoenzyme is formed, which can initiate transcription. Mg(2+) serves as cofactor. Zn(2+) is required as a cofactor.

The enzyme catalyses RNA(n) + a ribonucleoside 5'-triphosphate = RNA(n+1) + diphosphate. Functionally, DNA-dependent RNA polymerase catalyzes the transcription of DNA into RNA using the four ribonucleoside triphosphates as substrates. The protein is DNA-directed RNA polymerase subunit beta' of Cupriavidus necator (strain ATCC 17699 / DSM 428 / KCTC 22496 / NCIMB 10442 / H16 / Stanier 337) (Ralstonia eutropha).